A 64-amino-acid polypeptide reads, in one-letter code: Large ribosomal subunit protein uL30 (64 aa).

This sequence belongs to the universal ribosomal protein uL30 family. In terms of assembly, part of the 50S ribosomal subunit.

In Methylorubrum extorquens (strain CM4 / NCIMB 13688) (Methylobacterium extorquens), this protein is Large ribosomal subunit protein uL30.